Consider the following 276-residue polypeptide: Diaminopimelate epimerase (276 aa).

Positions 13, 46, and 66 each coordinate substrate. The active-site Proton donor is the C75. Residues 76 to 77 (GN), N159, N192, and 210 to 211 (ER) each bind substrate. Catalysis depends on C219, which acts as the Proton acceptor. Substrate is bound at residue 220 to 221 (GT).

It belongs to the diaminopimelate epimerase family. As to quaternary structure, homodimer.

The protein localises to the cytoplasm. The catalysed reaction is (2S,6S)-2,6-diaminopimelate = meso-2,6-diaminopimelate. It participates in amino-acid biosynthesis; L-lysine biosynthesis via DAP pathway; DL-2,6-diaminopimelate from LL-2,6-diaminopimelate: step 1/1. Catalyzes the stereoinversion of LL-2,6-diaminopimelate (L,L-DAP) to meso-diaminopimelate (meso-DAP), a precursor of L-lysine and an essential component of the bacterial peptidoglycan. This Aeromonas hydrophila subsp. hydrophila (strain ATCC 7966 / DSM 30187 / BCRC 13018 / CCUG 14551 / JCM 1027 / KCTC 2358 / NCIMB 9240 / NCTC 8049) protein is Diaminopimelate epimerase.